We begin with the raw amino-acid sequence, 367 residues long: UDP-N-acetylglucosamine--N-acetylmuramyl-(pentapeptide) pyrophosphoryl-undecaprenol N-acetylglucosamine transferase (367 aa).

Residues 15–17, asparagine 127, arginine 163, serine 191, isoleucine 249, and glutamine 294 contribute to the UDP-N-acetyl-alpha-D-glucosamine site; that span reads TGG.

It belongs to the glycosyltransferase 28 family. MurG subfamily.

Its subcellular location is the cell inner membrane. It carries out the reaction di-trans,octa-cis-undecaprenyl diphospho-N-acetyl-alpha-D-muramoyl-L-alanyl-D-glutamyl-meso-2,6-diaminopimeloyl-D-alanyl-D-alanine + UDP-N-acetyl-alpha-D-glucosamine = di-trans,octa-cis-undecaprenyl diphospho-[N-acetyl-alpha-D-glucosaminyl-(1-&gt;4)]-N-acetyl-alpha-D-muramoyl-L-alanyl-D-glutamyl-meso-2,6-diaminopimeloyl-D-alanyl-D-alanine + UDP + H(+). Its pathway is cell wall biogenesis; peptidoglycan biosynthesis. Its function is as follows. Cell wall formation. Catalyzes the transfer of a GlcNAc subunit on undecaprenyl-pyrophosphoryl-MurNAc-pentapeptide (lipid intermediate I) to form undecaprenyl-pyrophosphoryl-MurNAc-(pentapeptide)GlcNAc (lipid intermediate II). This chain is UDP-N-acetylglucosamine--N-acetylmuramyl-(pentapeptide) pyrophosphoryl-undecaprenol N-acetylglucosamine transferase, found in Burkholderia pseudomallei (strain 1710b).